Consider the following 427-residue polypeptide: Glutamate-1-semialdehyde 2,1-aminomutase (427 aa).

Lys265 is modified (N6-(pyridoxal phosphate)lysine).

This sequence belongs to the class-III pyridoxal-phosphate-dependent aminotransferase family. HemL subfamily. As to quaternary structure, homodimer. Requires pyridoxal 5'-phosphate as cofactor.

The protein resides in the cytoplasm. The enzyme catalyses (S)-4-amino-5-oxopentanoate = 5-aminolevulinate. It participates in porphyrin-containing compound metabolism; protoporphyrin-IX biosynthesis; 5-aminolevulinate from L-glutamyl-tRNA(Glu): step 2/2. The protein is Glutamate-1-semialdehyde 2,1-aminomutase of Bordetella parapertussis (strain 12822 / ATCC BAA-587 / NCTC 13253).